Reading from the N-terminus, the 482-residue chain is Argininosuccinate synthase (482 aa).

ATP contacts are provided by residues 17–25 (AFSGGLDTS) and Ala-43. Tyr-99 is an L-citrulline binding site. Residues Gly-129 and Thr-131 each contribute to the ATP site. L-aspartate is bound by residues Thr-131, Asn-135, and Asp-136. Residue Asn-135 participates in L-citrulline binding. Residue Asp-136 participates in ATP binding. L-citrulline-binding residues include Arg-139 and Ser-192. Asp-194 contributes to the ATP binding site. Residues Thr-201, Glu-203, and Glu-280 each coordinate L-citrulline. The segment at 461 to 482 (SRGEATDEETMLDRAAMESGTD) is disordered.

It belongs to the argininosuccinate synthase family. Type 2 subfamily. In terms of assembly, homotetramer.

The protein localises to the cytoplasm. It carries out the reaction L-citrulline + L-aspartate + ATP = 2-(N(omega)-L-arginino)succinate + AMP + diphosphate + H(+). It participates in amino-acid biosynthesis; L-arginine biosynthesis; L-arginine from L-ornithine and carbamoyl phosphate: step 2/3. The sequence is that of Argininosuccinate synthase (argG) from Streptomyces lavendulae.